Consider the following 316-residue polypeptide: tRNA-cytidine(32) 2-sulfurtransferase (316 aa).

A PP-loop motif motif is present at residues 52-57 (SGGKDS). [4Fe-4S] cluster contacts are provided by Cys-127, Cys-130, and Cys-218.

The protein belongs to the TtcA family. In terms of assembly, homodimer. It depends on Mg(2+) as a cofactor. The cofactor is [4Fe-4S] cluster.

It is found in the cytoplasm. It carries out the reaction cytidine(32) in tRNA + S-sulfanyl-L-cysteinyl-[cysteine desulfurase] + AH2 + ATP = 2-thiocytidine(32) in tRNA + L-cysteinyl-[cysteine desulfurase] + A + AMP + diphosphate + H(+). The protein operates within tRNA modification. Its function is as follows. Catalyzes the ATP-dependent 2-thiolation of cytidine in position 32 of tRNA, to form 2-thiocytidine (s(2)C32). The sulfur atoms are provided by the cysteine/cysteine desulfurase (IscS) system. The polypeptide is tRNA-cytidine(32) 2-sulfurtransferase (Haemophilus ducreyi (strain 35000HP / ATCC 700724)).